The chain runs to 223 residues: Thiamine-phosphate synthase (223 aa).

Residues 45–49 and N77 each bind 4-amino-2-methyl-5-(diphosphooxymethyl)pyrimidine; that span reads QYREK. Residues D78 and D97 each contribute to the Mg(2+) site. T116 provides a ligand contact to 4-amino-2-methyl-5-(diphosphooxymethyl)pyrimidine. 142–144 is a 2-[(2R,5Z)-2-carboxy-4-methylthiazol-5(2H)-ylidene]ethyl phosphate binding site; it reads SYT. Residue K145 coordinates 4-amino-2-methyl-5-(diphosphooxymethyl)pyrimidine. Residues G173 and 193–194 contribute to the 2-[(2R,5Z)-2-carboxy-4-methylthiazol-5(2H)-ylidene]ethyl phosphate site; that span reads VT.

Belongs to the thiamine-phosphate synthase family. The cofactor is Mg(2+).

The catalysed reaction is 2-[(2R,5Z)-2-carboxy-4-methylthiazol-5(2H)-ylidene]ethyl phosphate + 4-amino-2-methyl-5-(diphosphooxymethyl)pyrimidine + 2 H(+) = thiamine phosphate + CO2 + diphosphate. It carries out the reaction 2-(2-carboxy-4-methylthiazol-5-yl)ethyl phosphate + 4-amino-2-methyl-5-(diphosphooxymethyl)pyrimidine + 2 H(+) = thiamine phosphate + CO2 + diphosphate. It catalyses the reaction 4-methyl-5-(2-phosphooxyethyl)-thiazole + 4-amino-2-methyl-5-(diphosphooxymethyl)pyrimidine + H(+) = thiamine phosphate + diphosphate. It participates in cofactor biosynthesis; thiamine diphosphate biosynthesis; thiamine phosphate from 4-amino-2-methyl-5-diphosphomethylpyrimidine and 4-methyl-5-(2-phosphoethyl)-thiazole: step 1/1. Condenses 4-methyl-5-(beta-hydroxyethyl)thiazole monophosphate (THZ-P) and 2-methyl-4-amino-5-hydroxymethyl pyrimidine pyrophosphate (HMP-PP) to form thiamine monophosphate (TMP). The chain is Thiamine-phosphate synthase from Dictyoglomus thermophilum (strain ATCC 35947 / DSM 3960 / H-6-12).